The chain runs to 101 residues: Protein S100-A3 (101 aa).

Ala-2 bears the N-acetylalanine mark. 2 EF-hand domains span residues 12-47 and 50-85; these read IVCT…TWTP and FREC…LCLY. Ca(2+)-binding residues include Lys-28 and Glu-33. A disulfide bridge links Cys-30 with Cys-68. Residue Arg-51 is modified to Citrulline; by PAD3. 5 residues coordinate Ca(2+): Asp-63, Asn-65, Asp-67, Glu-69, and Glu-74. Cys-81 and Cys-99 are joined by a disulfide. 4 residues coordinate Zn(2+): Cys-83, Cys-86, His-87, and Cys-93.

The protein belongs to the S-100 family. Homodimer and homotetramer for the citrullinated form. In terms of processing, more than half of the arginine residues undergo citrullination by PAD1 and PAD2. Arg-51 is specifically citrullinated by PAD3 and promotes tetramerization. Skin specific, specifically expressed at the inner endocuticle of hair fibers.

It is found in the cytoplasm. Binds both calcium and zinc. May be involved in calcium-dependent cuticle cell differentiation, hair shaft and hair cuticular barrier formation. The polypeptide is Protein S100-A3 (S100A3) (Homo sapiens (Human)).